We begin with the raw amino-acid sequence, 55 residues long: Large ribosomal subunit protein bL33 (55 aa).

This sequence belongs to the bacterial ribosomal protein bL33 family.

In Paraburkholderia phytofirmans (strain DSM 17436 / LMG 22146 / PsJN) (Burkholderia phytofirmans), this protein is Large ribosomal subunit protein bL33.